The primary structure comprises 164 residues: Small ribosomal subunit protein uS5 (164 aa).

In terms of domain architecture, S5 DRBM spans 10 to 73 (LEERVVAINR…EAAKKNMIEV (64 aa)).

The protein belongs to the universal ribosomal protein uS5 family. As to quaternary structure, part of the 30S ribosomal subunit. Contacts proteins S4 and S8.

In terms of biological role, with S4 and S12 plays an important role in translational accuracy. Functionally, located at the back of the 30S subunit body where it stabilizes the conformation of the head with respect to the body. This Streptococcus pyogenes serotype M1 protein is Small ribosomal subunit protein uS5.